The following is a 117-amino-acid chain: MGAARRIDPTQPYVKKKNIINFTVATENTHIHLADGQSFPVLKGEIIATDQQGNQFVELEKNLDDYVPVKKSSLYESMAQGYMEMGDINREISEAFNYAENEAETVTTKLITGAYND.

In Bacillus subtilis (strain 168), this protein is SPbeta prophage-derived uncharacterized protein YosL (yosL).